Consider the following 171-residue polypeptide: NADH-quinone oxidoreductase subunit B 1 (171 aa).

Residues Cys-44, Cys-45, Cys-110, and Cys-139 each contribute to the [4Fe-4S] cluster site.

It belongs to the complex I 20 kDa subunit family. In terms of assembly, NDH-1 is composed of 14 different subunits. Subunits NuoB, C, D, E, F, and G constitute the peripheral sector of the complex. [4Fe-4S] cluster is required as a cofactor.

The protein resides in the cell inner membrane. The catalysed reaction is a quinone + NADH + 5 H(+)(in) = a quinol + NAD(+) + 4 H(+)(out). Its function is as follows. NDH-1 shuttles electrons from NADH, via FMN and iron-sulfur (Fe-S) centers, to quinones in the respiratory chain. The immediate electron acceptor for the enzyme in this species is believed to be ubiquinone. Couples the redox reaction to proton translocation (for every two electrons transferred, four hydrogen ions are translocated across the cytoplasmic membrane), and thus conserves the redox energy in a proton gradient. The chain is NADH-quinone oxidoreductase subunit B 1 from Opitutus terrae (strain DSM 11246 / JCM 15787 / PB90-1).